We begin with the raw amino-acid sequence, 428 residues long: Cytochrome P450-terp (428 aa).

Cys377 contributes to the heme binding site.

It belongs to the cytochrome P450 family. Heme is required as a cofactor.

It localises to the cytoplasm. In terms of biological role, catalyzes the hydroxylation of alpha-terpineol. The chain is Cytochrome P450-terp (cyp108) from Pseudomonas sp.